The following is a 409-amino-acid chain: Argininosuccinate synthase (409 aa).

Residues 12–20 (AYSGGLDTS) and A39 contribute to the ATP site. L-citrulline is bound by residues Y90 and S95. Residue G120 coordinates ATP. Residues T122, N126, and D127 each coordinate L-aspartate. L-citrulline is bound at residue N126. Residues R130, S181, S190, E266, and Y278 each contribute to the L-citrulline site.

This sequence belongs to the argininosuccinate synthase family. Type 1 subfamily. In terms of assembly, homotetramer.

It localises to the cytoplasm. It catalyses the reaction L-citrulline + L-aspartate + ATP = 2-(N(omega)-L-arginino)succinate + AMP + diphosphate + H(+). The protein operates within amino-acid biosynthesis; L-arginine biosynthesis; L-arginine from L-ornithine and carbamoyl phosphate: step 2/3. This is Argininosuccinate synthase from Gluconacetobacter diazotrophicus (strain ATCC 49037 / DSM 5601 / CCUG 37298 / CIP 103539 / LMG 7603 / PAl5).